The primary structure comprises 670 residues: MSSPPPFTSIFGGPAESAEEIDADADNSQLKPHNRSNVTATSAKLVGKSVAPFLAKHVPDQYAPLGSQNREPAALSSANSRYCYRHRPDRKCRRQADEPTMDKLQRELESLPQSDQQGIAHVWSLFSAAPAKHRKLILQGIMAQCCFPQLSFISTTVRDLIRIDFIAALPPEISFKILCYLDTTSLCKAAQVSRRWRALADDDVVWHRMCEQHIHRKCKKCGWGLPLLDRKRLRESKREIEIRATTWDVNGTSPKATPALPEDASPVADSSGTGKRKPEPSEEETAVVKRHCQSLAMRPEGSEDYFKTRYRPWKEVYKDRFKVGTNWKYGRCSIRIFKGHTNGVMCLQFEDNILATGSYDATIKIWDTDTGQEIRTLRGHESGIRCLQFDDTKLISGSMDGSVKVWNWRTGDCISTYTGHRGGVIGLHFDATILASASVDKTVKIWNFEDKSTCLLRGHTDWVNAVRVDTASRTVFSASDDCTVRLWDLDTKSCIRTFHGHVGQVQQVVPLPREFEFEEHDVECENDNLSTVSGDTEPASLQATLGLESNAVISQSSPFGPSFESGRTAPPRYIVTSALDSTIRLWETSTGRCLRTFFGHLEGVWALAADTLRIVSGAEDRMIKIWDPRTGKCERTFTGHSGPVTCIGLGDSRFATGSEDCEVRMYSFQS.

The segment at 1-38 (MSSPPPFTSIFGGPAESAEEIDADADNSQLKPHNRSNV) is disordered. Polar residues predominate over residues 27–38 (NSQLKPHNRSNV). The 47-residue stretch at 163 to 209 (IDFIAALPPEISFKILCYLDTTSLCKAAQVSRRWRALADDDVVWHRM) folds into the F-box domain. The interval 249-287 (VNGTSPKATPALPEDASPVADSSGTGKRKPEPSEEETAV) is disordered. WD repeat units lie at residues 339–376 (GHTNGVMCLQFEDNILATGSYDATIKIWDTDTGQEIRT), 379–418 (GHESGIRCLQFDDTKLISGSMDGSVKVWNWRTGDCISTYT), 420–456 (HRGGVIGLHFDATILASASVDKTVKIWNFEDKSTCLL), 458–499 (GHTD…RTFH), 553–596 (ISQS…CLRT), 599–636 (GHLEGVWALAADTLRIVSGAEDRMIKIWDPRTGKCERT), and 639–670 (GHSGPVTCIGLGDSRFATGSEDCEVRMYSFQS).

It belongs to the WD repeat MET30/SCONB/SCON-2 family. Component of the SCF(sconB) E3 ubiquitin ligase complex.

It participates in protein modification; protein ubiquitination. In terms of biological role, component of the SCF(sconB) E3 ubiquitin ligase complex involved in the regulation of sulfur metabolite repression, probably by mediating the inactivation or degradation of the metR transcription factor. The sequence is that of Probable E3 ubiquitin ligase complex SCF subunit sconB (sconB) from Aspergillus niger (strain ATCC MYA-4892 / CBS 513.88 / FGSC A1513).